Here is a 215-residue protein sequence, read N- to C-terminus: UPF0441 protein SG0265 (215 aa).

The protein belongs to the UPF0441 family.

This Sodalis glossinidius (strain morsitans) protein is UPF0441 protein SG0265.